The primary structure comprises 703 residues: Putative glycosyl hydrolase ecdE (703 aa).

The N-terminal stretch at 1 to 21 (MKLNIFASAILLCTSAFPVAA) is a signal peptide. Asp47 is a catalytic residue. N-linked (GlcNAc...) asparagine glycans are attached at residues Asn104, Asn120, Asn293, Asn397, Asn443, and Asn641.

The protein belongs to the glycosyl hydrolase 32 family.

This is Putative glycosyl hydrolase ecdE from Aspergillus rugulosus (Emericella rugulosa).